Consider the following 359-residue polypeptide: Guanine nucleotide-binding protein subunit alpha-11 (359 aa).

2 S-palmitoyl cysteine lipidation sites follow: Cys9 and Cys10. Residues Arg38–Val359 enclose the G-alpha domain. A G1 motif region spans residues Lys41–Thr54. Residues Gly46 to Ser53 and Leu180 to Arg183 contribute to the GTP site. Ser53 provides a ligand contact to Mg(2+). The G2 motif stretch occupies residues Asp178–Thr186. Thr186 is a binding site for Mg(2+). The interval Phe201 to Arg210 is G3 motif. The tract at residues Ile270–Asp277 is G4 motif. GTP-binding positions include Asn274–Asp277 and Ala331. The interval Thr329 to Thr334 is G5 motif.

The protein belongs to the G-alpha family. G(q) subfamily. In terms of assembly, g proteins are composed of 3 units; alpha, beta and gamma. The alpha chain contains the guanine nucleotide binding site. Interacts with RGS22. Interacts with NTSR1.

Its subcellular location is the cell membrane. It is found in the cytoplasm. The enzyme catalyses GTP + H2O = GDP + phosphate + H(+). Functionally, guanine nucleotide-binding proteins (G proteins) function as transducers downstream of G protein-coupled receptors (GPCRs) in numerous signaling cascades. The alpha chain contains the guanine nucleotide binding site and alternates between an active, GTP-bound state and an inactive, GDP-bound state. Signaling by an activated GPCR promotes GDP release and GTP binding. The alpha subunit has a low GTPase activity that converts bound GTP to GDP, thereby terminating the signal. Both GDP release and GTP hydrolysis are modulated by numerous regulatory proteins. Signaling is mediated via phospholipase C-beta-dependent inositol lipid hydrolysis for signal propagation: activates phospholipase C-beta: following GPCR activation, GNA11 activates PLC-beta (PLCB1, PLCB2, PLCB3 or PLCB4), leading to production of diacylglycerol (DAG) and inositol 1,4,5-trisphosphate (IP3). Transduces FFAR4 signaling in response to long-chain fatty acids (LCFAs). Together with GNAQ, required for heart development. In the respiratory epithelium, transmits OXGR1-dependent signals that lead to downstream intracellular Ca(2+) release and mucocilliary clearance of airborne pathogens. The chain is Guanine nucleotide-binding protein subunit alpha-11 (Gna11) from Rattus norvegicus (Rat).